Here is a 250-residue protein sequence, read N- to C-terminus: Silencing boundary-establishment protein FUB1 (250 aa).

Positions 179-250 are disordered; sequence PDWSGGLPNP…GFGGSGSGFI (72 aa). Basic and acidic residues predominate over residues 202-213; sequence PNRRPAPRREDM. The span at 229-250 shows a compositional bias: gly residues; the sequence is PGSGGFGGSGSGGFGGSGSGFI.

Belongs to the proteasome inhibitor PI31 family. In terms of assembly, interacts with the 20S proteasome.

Its function is as follows. Plays a role in the establishment of transcriptional silencing boundaries, preventing the propagation of heterochromatic silencing. The protein is Silencing boundary-establishment protein FUB1 of Saccharomyces cerevisiae (strain ATCC 204508 / S288c) (Baker's yeast).